Consider the following 51-residue polypeptide: Small ribosomal subunit protein eS31 (51 aa).

4 residues coordinate Zn(2+): Cys-21, Cys-24, Cys-39, and Cys-42. The C4-type zinc finger occupies 21-42; it reads CVRCSNGVFMADHGDRYACGKC.

This sequence belongs to the eukaryotic ribosomal protein eS31 family. In terms of assembly, part of the 30S ribosomal subunit. The cofactor is Zn(2+).

The chain is Small ribosomal subunit protein eS31 from Methanothermobacter thermautotrophicus (strain ATCC 29096 / DSM 1053 / JCM 10044 / NBRC 100330 / Delta H) (Methanobacterium thermoautotrophicum).